A 141-amino-acid chain; its full sequence is Nucleoside diphosphate kinase (141 aa).

Lys-9, Phe-57, Arg-85, Thr-91, Arg-102, and Asn-112 together coordinate ATP. His-115 functions as the Pros-phosphohistidine intermediate in the catalytic mechanism.

It belongs to the NDK family. Homotetramer. It depends on Mg(2+) as a cofactor.

The protein resides in the cytoplasm. The catalysed reaction is a 2'-deoxyribonucleoside 5'-diphosphate + ATP = a 2'-deoxyribonucleoside 5'-triphosphate + ADP. It carries out the reaction a ribonucleoside 5'-diphosphate + ATP = a ribonucleoside 5'-triphosphate + ADP. Major role in the synthesis of nucleoside triphosphates other than ATP. The ATP gamma phosphate is transferred to the NDP beta phosphate via a ping-pong mechanism, using a phosphorylated active-site intermediate. In Chlamydia trachomatis serovar L2 (strain ATCC VR-902B / DSM 19102 / 434/Bu), this protein is Nucleoside diphosphate kinase.